Reading from the N-terminus, the 178-residue chain is MEQYHGTTILSVRRGNSVALGGDGQVTLGNIVVKASARKVRTLYQGQILAGFAGGTADAFTLFERFEAKLDKHQGNLLRSAVELAKDWRTDRMLRRLEAMLAVADREHSLIITGNGDVLEPEQGIVAIGSGGAYAQSAARALIENTELSPRDVIAKSLAIAGDLCIYTNQCHTIEVLD.

Threonine 7 is an active-site residue. Residues glycine 162, cysteine 165, and threonine 168 each coordinate Na(+).

It belongs to the peptidase T1B family. HslV subfamily. In terms of assembly, a double ring-shaped homohexamer of HslV is capped on each side by a ring-shaped HslU homohexamer. The assembly of the HslU/HslV complex is dependent on binding of ATP.

The protein resides in the cytoplasm. It catalyses the reaction ATP-dependent cleavage of peptide bonds with broad specificity.. Allosterically activated by HslU binding. Protease subunit of a proteasome-like degradation complex believed to be a general protein degrading machinery. In Azoarcus sp. (strain BH72), this protein is ATP-dependent protease subunit HslV.